We begin with the raw amino-acid sequence, 255 residues long: Geranylgeranylglyceryl phosphate synthase (255 aa).

The Mg(2+) site is built by aspartate 26 and serine 55. Sn-glycerol 1-phosphate contacts are provided by residues 174 to 180 (YLEAGSG), 205 to 206 (GG), and 227 to 228 (GT).

It belongs to the GGGP/HepGP synthase family. Group II subfamily. The cofactor is Mg(2+).

Its subcellular location is the cytoplasm. The enzyme catalyses sn-glycerol 1-phosphate + (2E,6E,10E)-geranylgeranyl diphosphate = sn-3-O-(geranylgeranyl)glycerol 1-phosphate + diphosphate. It participates in membrane lipid metabolism; glycerophospholipid metabolism. Its function is as follows. Prenyltransferase that catalyzes the transfer of the geranylgeranyl moiety of geranylgeranyl diphosphate (GGPP) to the C3 hydroxyl of sn-glycerol-1-phosphate (G1P). This reaction is the first ether-bond-formation step in the biosynthesis of archaeal membrane lipids. The polypeptide is Geranylgeranylglyceryl phosphate synthase (Thermococcus sibiricus (strain DSM 12597 / MM 739)).